Here is a 105-residue protein sequence, read N- to C-terminus: UPF0148 protein PYRAB12700 (105 aa).

Belongs to the UPF0148 family.

The sequence is that of UPF0148 protein PYRAB12700 from Pyrococcus abyssi (strain GE5 / Orsay).